The following is a 1700-amino-acid chain: Ras-responsive element-binding protein 1 (1700 aa).

The interval 31 to 63 is disordered; it reads TENGGSPQGIKSPMKPPGPNRIGRRNQETKEEK. 2 positions are modified to phosphoserine: Ser-36 and Ser-42. 3 consecutive C2H2-type zinc fingers follow at residues 66–88, 97–119, and 125–147; these read YNCP…IRQH, HACS…MLVH, and YKCT…MKIH. Residues 146 to 195 are disordered; the sequence is IHEKDTNSTTAAAPPSPLKRRRLSSKRKLSHDAESEDPGPAKKMVEDGQS. Position 161 is a phosphoserine (Ser-161). The span at 163–174 shows a compositional bias: basic residues; that stretch reads LKRRRLSSKRKL. Residues Ser-175 and Ser-180 each carry the phosphoserine modification. Residues 184–195 show a composition bias toward basic and acidic residues; the sequence is GPAKKMVEDGQS. A C2H2-type 4 zinc finger spans residues 206 to 228; sequence FHCPVCFKEFVCKYELETHMETH. Residue Ser-229 is modified to Phosphoserine. 2 C2H2-type zinc fingers span residues 233 to 256 and 314 to 336; these read LRCD…ALVH and FVCD…RQSH. Glycyl lysine isopeptide (Lys-Gly) (interchain with G-Cter in SUMO2) cross-links involve residues Lys-433, Lys-500, Lys-549, Lys-564, Lys-591, and Lys-611. Lys-613 is covalently cross-linked (Glycyl lysine isopeptide (Lys-Gly) (interchain with G-Cter in SUMO1); alternate). A Glycyl lysine isopeptide (Lys-Gly) (interchain with G-Cter in SUMO2); alternate cross-link involves residue Lys-613. Residue Lys-622 forms a Glycyl lysine isopeptide (Lys-Gly) (interchain with G-Cter in SUMO2) linkage. 5 C2H2-type zinc fingers span residues 641–663, 669–691, 697–720, 751–782, and 788–813; these read YPCR…VRSH, YQCN…IRTH, YICK…RKKH, TVCR…GGCH, and FECK…QHLH. Glycyl lysine isopeptide (Lys-Gly) (interchain with G-Cter in SUMO2) cross-links involve residues Lys-855, Lys-883, and Lys-911. Disordered stretches follow at residues 939 to 991 and 1092 to 1177; these read IPKS…SLET and ADPG…AVDL. Over residues 944 to 961 the composition is skewed to basic and acidic residues; the sequence is KKGDKDTVVPSDAKKPEP. Residue Ser-970 is modified to Phosphoserine. A compositionally biased stretch (polar residues) spans 1097–1111; the sequence is SITSSNTVATDSPGS. Residues Ser-1125, Ser-1137, and Ser-1138 each carry the phosphoserine modification. Low complexity predominate over residues 1137-1146; that stretch reads SSPEEALPTE. Basic residues predominate over residues 1155–1165; the sequence is SRKRGRKRGLR. Residues Ser-1172, Ser-1179, Ser-1180, and Ser-1230 each carry the phosphoserine modification. 4 disordered regions span residues 1195–1235, 1273–1368, 1383–1521, and 1564–1670; these read TNKF…AEDR, HTDS…QSLD, SEAG…RKKV, and VRHQ…SPAA. Residues 1251–1273 form a C2H2-type 12 zinc finger; that stretch reads INCPHCPRVFPWASSLQRHMLTH. Low complexity predominate over residues 1273–1285; that stretch reads HTDSQSDTDTLTT. The span at 1327–1346 shows a compositional bias: acidic residues; sequence SEEEEEKETEENPEPEEECR. The C2H2-type 13 zinc-finger motif lies at 1400 to 1422; that stretch reads HACDTCGKNFKFLGTLSRHKKAH. Ser-1450 and Ser-1452 each carry phosphoserine. Basic and acidic residues predominate over residues 1492–1507; sequence TAEKRGDGDKRPKTDS. C2H2-type zinc fingers lie at residues 1520–1542 and 1548–1570; these read KVCS…MRSH and YKCQ…QRIH. The segment covering 1564–1580 has biased composition (basic residues); the sequence is VRHQRIHQKARHSKHHG. Ser-1593 and Ser-1606 each carry phosphoserine. Residues 1645-1660 are compositionally biased toward low complexity; that stretch reads AEQAAEPSAPKEQASP. The residue at position 1667 (Ser-1667) is a Phosphoserine.

It belongs to the krueppel C2H2-type zinc-finger protein family. In terms of assembly, interacts with NEUROD1. Interacts with AR. Expressed in splenic B-cells.

It is found in the nucleus speckle. Transcription factor that binds specifically to the RAS-responsive elements (RRE) of gene promoters. Represses the angiotensinogen gene. Negatively regulates the transcriptional activity of AR. Potentiates the transcriptional activity of NEUROD1. Binds specifically to the allelic variant of the CDKN2A promoter present in Balb/c mice, which leads to a down-regulation of CDKN2A expression in this strain, and, as a consequence, to an elevated susceptibility to pristane-induced tumors. Promotes brown adipocyte differentiation. May be involved in Ras/Raf-mediated cell differentiation by enhancing calcitonin expression. The protein is Ras-responsive element-binding protein 1 (Rreb1) of Mus musculus (Mouse).